We begin with the raw amino-acid sequence, 153 residues long: Large ribosomal subunit protein bL9 (153 aa).

It belongs to the bacterial ribosomal protein bL9 family.

Binds to the 23S rRNA. This chain is Large ribosomal subunit protein bL9, found in Blochmanniella pennsylvanica (strain BPEN).